The chain runs to 629 residues: Protein EDS1B (629 aa).

The active-site Nucleophile is the serine 123. Active-site charge relay system residues include aspartate 187 and histidine 317.

As to quaternary structure, interacts (via N-terminus) with PAD4 and SAG101. Part of a nuclear complex made of EDS1, PAD4 and SAG101, that can be redirected to the cytoplasm in the presence of an extranuclear form of EDS1. Does not interact with itself or with EDS1.

It localises to the nucleus. Its subcellular location is the cytoplasm. Functionally, acts as a second functional copy of EDS1. Can mediate HRT-mediated resistance to turnip crinkle virus. The sequence is that of Protein EDS1B (EDS1B) from Arabidopsis thaliana (Mouse-ear cress).